A 103-amino-acid chain; its full sequence is Cystatin-A8 (103 aa).

The segment at 1–20 is disordered; it reads MESEEMLAGGLTEPRPATPE. Residues 51–55 carry the Secondary area of contact motif; sequence QVVAG.

This sequence belongs to the cystatin family.

It localises to the cytoplasm. In terms of biological role, this is an intracellular thiol proteinase inhibitor. The protein is Cystatin-A8 of Sus scrofa (Pig).